A 408-amino-acid polypeptide reads, in one-letter code: Aminoacylase-1 (408 aa).

His80 contributes to the Zn(2+) binding site. Asp82 is an active-site residue. Asp113 contacts Zn(2+). The active-site Proton acceptor is the Glu147. Zn(2+)-binding residues include Glu148, Glu175, and His373.

Belongs to the peptidase M20A family. As to quaternary structure, homodimer. Interacts with SPHK1. Zn(2+) is required as a cofactor.

The protein resides in the cytoplasm. It carries out the reaction an N-acyl-L-amino acid + H2O = an L-alpha-amino acid + a carboxylate. The enzyme catalyses N-acetyl-L-methionine + H2O = L-methionine + acetate. The catalysed reaction is N-acetyl-L-glutamine + H2O = L-glutamine + acetate. Its function is as follows. Catalyzes the hydrolysis of N-acetylated amino acids to acetate and free amino acids. This chain is Aminoacylase-1 (ACY1), found in Pongo abelii (Sumatran orangutan).